A 131-amino-acid chain; its full sequence is Large ribosomal subunit protein bL17 (131 aa).

The protein belongs to the bacterial ribosomal protein bL17 family. In terms of assembly, part of the 50S ribosomal subunit. Contacts protein L32.

The sequence is that of Large ribosomal subunit protein bL17 from Cupriavidus pinatubonensis (strain JMP 134 / LMG 1197) (Cupriavidus necator (strain JMP 134)).